The primary structure comprises 278 residues: 4-deoxy-L-threo-5-hexosulose-uronate ketol-isomerase (278 aa).

H196, H198, E203, and H245 together coordinate Zn(2+).

Belongs to the KduI family. Zn(2+) serves as cofactor.

It catalyses the reaction 5-dehydro-4-deoxy-D-glucuronate = 3-deoxy-D-glycero-2,5-hexodiulosonate. Its pathway is glycan metabolism; pectin degradation; 2-dehydro-3-deoxy-D-gluconate from pectin: step 4/5. Catalyzes the isomerization of 5-dehydro-4-deoxy-D-glucuronate to 3-deoxy-D-glycero-2,5-hexodiulosonate. This chain is 4-deoxy-L-threo-5-hexosulose-uronate ketol-isomerase, found in Shigella flexneri.